The chain runs to 258 residues: SufE-like protein 2, chloroplastic (258 aa).

Residues 1–32 (MNTSSSFKALASPPLISTSRPTTKSFPNPRFT) are disordered. The segment covering 15–32 (LISTSRPTTKSFPNPRFT) has biased composition (polar residues). Catalysis depends on cysteine 122, which acts as the Cysteine persulfide intermediate.

The protein belongs to the SufE family. As to expression, highly expressed in flowers and pollen, and at low levels in roots, leaves and stems.

Its subcellular location is the plastid. The protein resides in the chloroplast. It functions in the pathway cofactor biosynthesis; iron-sulfur cluster biosynthesis. Its function is as follows. Participates in cysteine desulfurization mediated by NFS2. Can activate the cysteine desulfurase activity of NFS2 in vitro. Cysteine desulfurization mobilizes sulfur from L-cysteine to yield L-alanine and supplies the inorganic sulfur for iron-sulfur (Fe-S) cluster formation. The chain is SufE-like protein 2, chloroplastic (SUFE2) from Arabidopsis thaliana (Mouse-ear cress).